The sequence spans 673 residues: Protein kinase C delta type (673 aa).

The 106-residue stretch at methionine 1 to leucine 106 folds into the C2 domain. Phosphothreonine occurs at positions 43 and 50. Tyrosine 64 bears the Phosphotyrosine mark. The residue at position 130 (serine 130) is a Phosphoserine. A Phosphothreonine modification is found at threonine 141. Tyrosine 155 bears the Phosphotyrosine mark. The Phorbol-ester/DAG-type 1 zinc-finger motif lies at asparagine 158–cysteine 208. The residue at position 218 (threonine 218) is a Phosphothreonine. A Phorbol-ester/DAG-type 2 zinc finger spans residues proline 230–cysteine 280. Phosphoserine; by autocatalysis is present on serine 299. Residues tyrosine 311 and tyrosine 332 each carry the phosphotyrosine; by SRC modification. A Protein kinase domain is found at phenylalanine 347 to phenylalanine 601. Position 353–361 (leucine 353–valine 361) interacts with ATP. At tyrosine 372 the chain carries Phosphotyrosine. Residue lysine 376 coordinates ATP. Position 449 is a phosphothreonine (threonine 449). The active-site Proton acceptor is the aspartate 471. Serine 504 is modified (phosphoserine). The residue at position 505 (threonine 505) is a Phosphothreonine; by autocatalysis. The residue at position 565 (tyrosine 565) is a Phosphotyrosine. One can recognise an AGC-kinase C-terminal domain in the interval lysine 602 to glutamate 673. Residues serine 643, serine 652, and serine 662 each carry the phosphoserine modification.

The protein belongs to the protein kinase superfamily. AGC Ser/Thr protein kinase family. PKC subfamily. As to quaternary structure, interacts with PDPK1 (via N-terminal region). Interacts with RAD9A. Interacts with CDCP1. Interacts with MUC1. Interacts with VASP. Interacts with CAVIN3. Interacts with PRKD2 (via N-terminus and zing-finger domain 1 and 2) in response to oxidative stress; the interaction is independent of PRKD2 tyrosine phosphorylation. Interacts with PLSC3; interaction is enhanced by UV irradiation. Post-translationally, autophosphorylated and/or phosphorylated at Thr-505, within the activation loop; phosphorylation at Thr-505 is not a prerequisite for enzymatic activity. Autophosphorylated at Ser-299. Upon TNFSF10/TRAIL treatment, phosphorylated at Tyr-155; phosphorylation is required for its translocation to the endoplasmic reticulum and cleavage by caspase-3. Phosphorylated at Tyr-311, Tyr-332 and Tyr-565; phosphorylation of Tyr-311 and Tyr-565 following thrombin or zymosan stimulation potentiates its kinase activity. Phosphorylated by protein kinase PDPK1; phosphorylation is inhibited by the apoptotic C-terminal cleavage product of PKN2. Phosphorylated at Tyr-311 and Tyr-332 by SRC; phosphorylation leads to enhanced autophosphorylation at Thr-505. Phosphorylated at Tyr-311 through a SYK and SRC mechanism downstream of C-type lectin receptors activation, promoting its activation. In terms of processing, proteolytically cleaved into a catalytic subunit and a regulatory subunit by caspase-3 during apoptosis which results in kinase activation.

It localises to the cytoplasm. It is found in the nucleus. The protein localises to the perinuclear region. Its subcellular location is the cell membrane. The protein resides in the mitochondrion. It localises to the endomembrane system. The enzyme catalyses L-seryl-[protein] + ATP = O-phospho-L-seryl-[protein] + ADP + H(+). The catalysed reaction is L-threonyl-[protein] + ATP = O-phospho-L-threonyl-[protein] + ADP + H(+). It catalyses the reaction L-tyrosyl-[protein] + ATP = O-phospho-L-tyrosyl-[protein] + ADP + H(+). Its activity is regulated as follows. Novel PKCs (PRKCD, PRKCE, PRKCH and PRKCQ) are calcium-insensitive, but activated by diacylglycerol (DAG) and phosphatidylserine. Three specific sites; Thr-505 (activation loop of the kinase domain), Ser-643 (turn motif) and Ser-662 (hydrophobic region), need to be phosphorylated for its full activation. Activated by caspase-3 (CASP3) cleavage during apoptosis. After cleavage, the pseudosubstrate motif in the regulatory subunit is released from the substrate recognition site of the catalytic subunit, which enables PRKCD to become constitutively activated. The catalytic subunit which displays properties of a sphingosine-dependent protein kinase is activated by D-erythro-sphingosine (Sph) or N,N-dimethyl-D-erythrosphingosine (DMS) or N,N,N-trimethyl-D-erythrosphingosine (TMS), but not by ceramide or Sph-1-P and is strongly inhibited by phosphatidylserine. In terms of biological role, calcium-independent, phospholipid- and diacylglycerol (DAG)-dependent serine/threonine-protein kinase that plays contrasting roles in cell death and cell survival by functioning as a pro-apoptotic protein during DNA damage-induced apoptosis, but acting as an anti-apoptotic protein during cytokine receptor-initiated cell death, is involved in tumor suppression, is required for oxygen radical production by NADPH oxidase and acts as a positive or negative regulator in platelet functional responses. Upon DNA damage, activates the promoter of the death-promoting transcription factor BCLAF1/Btf to trigger BCLAF1-mediated p53/TP53 gene transcription and apoptosis. In response to oxidative stress, interact with and activate CHUK/IKKA in the nucleus, causing the phosphorylation of p53/TP53. In the case of ER stress or DNA damage-induced apoptosis, can form a complex with the tyrosine-protein kinase ABL1 which trigger apoptosis independently of p53/TP53. In cytosol can trigger apoptosis by activating MAPK11 or MAPK14, inhibiting AKT1 and decreasing the level of X-linked inhibitor of apoptosis protein (XIAP), whereas in nucleus induces apoptosis via the activation of MAPK8 or MAPK9. Upon ionizing radiation treatment, is required for the activation of the apoptosis regulators BAX and BAK, which trigger the mitochondrial cell death pathway. Can phosphorylate MCL1 and target it for degradation which is sufficient to trigger for BAX activation and apoptosis. Is required for the control of cell cycle progression both at G1/S and G2/M phases. Mediates phorbol 12-myristate 13-acetate (PMA)-induced inhibition of cell cycle progression at G1/S phase by up-regulating the CDK inhibitor CDKN1A/p21 and inhibiting the cyclin CCNA2 promoter activity. In response to UV irradiation can phosphorylate CDK1, which is important for the G2/M DNA damage checkpoint activation. Can protect glioma cells from the apoptosis induced by TNFSF10/TRAIL, probably by inducing increased phosphorylation and subsequent activation of AKT1. Can also act as tumor suppressor upon mitogenic stimulation with PMA or TPA. In N-formyl-methionyl-leucyl-phenylalanine (fMLP)-treated cells, is required for NCF1 (p47-phox) phosphorylation and activation of NADPH oxidase activity, and regulates TNF-elicited superoxide anion production in neutrophils, by direct phosphorylation and activation of NCF1 or indirectly through MAPK1/3 (ERK1/2) signaling pathways. Involved in antifungal immunity by mediating phosphorylation and activation of CARD9 downstream of C-type lectin receptors activation, promoting interaction between CARD9 and BCL10, followed by activation of NF-kappa-B and MAP kinase p38 pathways. May also play a role in the regulation of NADPH oxidase activity in eosinophil after stimulation with IL5, leukotriene B4 or PMA. In collagen-induced platelet aggregation, acts a negative regulator of filopodia formation and actin polymerization by interacting with and negatively regulating VASP phosphorylation. Downstream of PAR1, PAR4 and CD36/GP4 receptors, regulates differentially platelet dense granule secretion; acts as a positive regulator in PAR-mediated granule secretion, whereas it negatively regulates CD36/GP4-mediated granule release. Phosphorylates MUC1 in the C-terminal and regulates the interaction between MUC1 and beta-catenin. The catalytic subunit phosphorylates 14-3-3 proteins (YWHAB, YWHAZ and YWHAH) in a sphingosine-dependent fashion. Phosphorylates ELAVL1 in response to angiotensin-2 treatment. Phosphorylates mitochondrial phospholipid scramblase 3 (PLSCR3), resulting in increased cardiolipin expression on the mitochondrial outer membrane which facilitates apoptosis. Phosphorylates SMPD1 which induces SMPD1 secretion. Functionally, truncated isoform 2 is inactive. The sequence is that of Protein kinase C delta type from Rattus norvegicus (Rat).